The following is an 82-amino-acid chain: UPF0154 protein SMU_1719c (82 aa).

The helical transmembrane segment at 4-24 (FLWILLVIIALLAGLVGGTFI) threads the bilayer.

This sequence belongs to the UPF0154 family.

Its subcellular location is the membrane. This chain is UPF0154 protein SMU_1719c, found in Streptococcus mutans serotype c (strain ATCC 700610 / UA159).